The sequence spans 4306 residues: Cytoplasmic dynein 2 heavy chain 1 (4306 aa).

The stem stretch occupies residues 1–1650 (MAGSLSDVRK…YVQMVDSELQ (1650 aa)). 145 to 152 (LGVVLRKS) provides a ligand contact to ATP. Residues 669–696 (KELEGYIQKLQNAAERLATENRRLRKWH) adopt a coiled-coil conformation. 4 AAA regions span residues 1651-1875 (YTYE…VLRG), 1941-2161 (SALK…KQND), 2249-2505 (LTAD…WVLG), and 2617-2862 (HYGR…ESCK). ATP-binding positions include 1689 to 1696 (GPAGTGKT), 1979 to 1986 (GPSGAGKS), 2291 to 2298 (GPEGCGKG), and 2655 to 2662 (GRSGVGRR). The interval 2880–3168 (AISSSKRKEL…AEVSKAQETI (289 aa)) is stalk. Coiled-coil stretches lie at residues 2896–2981 (LQAG…KEVQ), 3108–3199 (LETE…LATL), and 3407–3441 (IQHEKPDLEEQKTKLLQQEEDKKIQLARLEESLLE). AAA regions lie at residues 3243 to 3472 (LCTE…LIQD) and 3689 to 3904 (MALF…VIDR).

It belongs to the dynein heavy chain family. In terms of assembly, the cytoplasmic dynein complex 2 is probably composed by a heavy chain DYNC2H1 homodimer and a number of DYNC2LI1 light intermediate chains. Widely expressed both in ciliated and unciliated tissues. Detected in brain and testis (at protein level).

Its subcellular location is the cytoplasm. It localises to the cytoskeleton. The protein localises to the cilium axoneme. It is found in the cell membrane. Its function is as follows. May function as a motor for intraflagellar retrograde transport. Functions in cilia biogenesis. May play a role in transport between endoplasmic reticulum and Golgi or organization of the Golgi in cells. The polypeptide is Cytoplasmic dynein 2 heavy chain 1 (Dync2h1) (Rattus norvegicus (Rat)).